Reading from the N-terminus, the 320-residue chain is MAETLQLNSTFLHPNFFILTGFPGLGSAQTWLTLVFGPIYLLALLGNGALPAVVWIDSTLHQPMFLLLAILAATDLGLATSIAPGLLAVLWLGPRSVPYAVCLVQMFFVHALTAMESGVLLAMACDRAAAIGRPLHYPVLVTKACVGYAALALALKAVAIVVPFPLLVAKFEHFQAKTIGHTYCAHMAVVELVVGNTQATNLYGLALSLAISGMDILGITGSYGLIAHAVLQLPTREAHAKAFGTCSSHICVILAFYIPGLFSYLTHRFGHHTVPKPVHILLSNIYLLLPPALNPLIYGARTKQIRDRLLETFTFRKSPL.

The Extracellular portion of the chain corresponds to 1 to 30 (MAETLQLNSTFLHPNFFILTGFPGLGSAQT). N-linked (GlcNAc...) asparagine glycosylation is present at asparagine 8. Residues 31-51 (WLTLVFGPIYLLALLGNGALP) traverse the membrane as a helical segment. The Cytoplasmic segment spans residues 52-59 (AVVWIDST). The chain crosses the membrane as a helical span at residues 60–80 (LHQPMFLLLAILAATDLGLAT). Topologically, residues 81 to 104 (SIAPGLLAVLWLGPRSVPYAVCLV) are extracellular. The helical transmembrane segment at 105 to 125 (QMFFVHALTAMESGVLLAMAC) threads the bilayer. The Cytoplasmic portion of the chain corresponds to 126 to 144 (DRAAAIGRPLHYPVLVTKA). Residues 145 to 165 (CVGYAALALALKAVAIVVPFP) form a helical membrane-spanning segment. Topologically, residues 166 to 201 (LLVAKFEHFQAKTIGHTYCAHMAVVELVVGNTQATN) are extracellular. A helical transmembrane segment spans residues 202–222 (LYGLALSLAISGMDILGITGS). Residues 223–242 (YGLIAHAVLQLPTREAHAKA) are Cytoplasmic-facing. A helical transmembrane segment spans residues 243-263 (FGTCSSHICVILAFYIPGLFS). Residues 264-279 (YLTHRFGHHTVPKPVH) are Extracellular-facing. The helical transmembrane segment at 280–300 (ILLSNIYLLLPPALNPLIYGA) threads the bilayer. The Cytoplasmic segment spans residues 301–320 (RTKQIRDRLLETFTFRKSPL).

Belongs to the G-protein coupled receptor 1 family.

The protein localises to the cell membrane. Functionally, odorant receptor. The protein is Olfactory receptor 52W1 (OR52W1) of Homo sapiens (Human).